A 635-amino-acid chain; its full sequence is Extracellular metalloproteinase mep (635 aa).

Residues 1-19 (MMRGLLLAGALGLPLAVLA) form the signal peptide. Residues 20 to 246 (HPTHHAHGLQ…VHGVVDYVAE (227 aa)) constitute a propeptide that is removed on maturation. An N-linked (GlcNAc...) asparagine glycan is attached at Asn-287. The span at 290–309 (TTRGNNGIAQSNPTGGSQYL) shows a compositional bias: polar residues. Positions 290–311 (TTRGNNGIAQSNPTGGSQYLKN) are disordered. A Zn(2+)-binding site is contributed by His-430. Glu-431 is an active-site residue. His-434 is a Zn(2+) binding site.

The protein belongs to the peptidase M36 family. Requires Zn(2+) as cofactor.

It localises to the secreted. Secreted metalloproteinase that allows assimilation of proteinaceous substrates. This is Extracellular metalloproteinase mep (mep) from Aspergillus flavus (strain ATCC 200026 / FGSC A1120 / IAM 13836 / NRRL 3357 / JCM 12722 / SRRC 167).